Here is an 85-residue protein sequence, read N- to C-terminus: Beta-mammal/insect toxin Lqhb1 (85 aa).

Positions methionine 1–threonine 19 are cleaved as a signal peptide. The region spanning aspartate 20–asparagine 82 is the LCN-type CS-alpha/beta domain. 4 disulfides stabilise this stretch: cysteine 31–cysteine 81, cysteine 35–cysteine 56, cysteine 42–cysteine 63, and cysteine 46–cysteine 65.

It belongs to the long (4 C-C) scorpion toxin superfamily. Sodium channel inhibitor family. As to expression, expressed by the venom gland.

Its subcellular location is the secreted. Beta toxins bind voltage-independently at site-4 of sodium channels (Nav) and shift the voltage of activation toward more negative potentials thereby affecting sodium channel activation and promoting spontaneous and repetitive firing. Competes, with apparent high affinity, with anti-insect and anti-mammalian beta-toxins for binding to cockroach and rat brain synaptosomes, respectively. Also competes with an anti-mammalian alpha-toxin on binding to rat brain sodium channels. Has a weak effect on cardiac sodium channels and a marked effect on rat brain and skeletal muscle sodium channels. This Leiurus hebraeus (Hebrew deathstalker scorpion) protein is Beta-mammal/insect toxin Lqhb1.